Here is a 420-residue protein sequence, read N- to C-terminus: 3-phosphoshikimate 1-carboxyvinyltransferase (420 aa).

Lys-20, Ser-21, and Arg-25 together coordinate 3-phosphoshikimate. Lys-20 serves as a coordination point for phosphoenolpyruvate. Gly-90 and Arg-118 together coordinate phosphoenolpyruvate. The 3-phosphoshikimate site is built by Ser-159, Ser-160, Gln-161, Ser-187, Asp-303, and Lys-330. Gln-161 contacts phosphoenolpyruvate. Catalysis depends on Asp-303, which acts as the Proton acceptor. Residues Arg-334, Arg-376, and Lys-402 each coordinate phosphoenolpyruvate.

Belongs to the EPSP synthase family. In terms of assembly, monomer.

It localises to the cytoplasm. The enzyme catalyses 3-phosphoshikimate + phosphoenolpyruvate = 5-O-(1-carboxyvinyl)-3-phosphoshikimate + phosphate. Its pathway is metabolic intermediate biosynthesis; chorismate biosynthesis; chorismate from D-erythrose 4-phosphate and phosphoenolpyruvate: step 6/7. Catalyzes the transfer of the enolpyruvyl moiety of phosphoenolpyruvate (PEP) to the 5-hydroxyl of shikimate-3-phosphate (S3P) to produce enolpyruvyl shikimate-3-phosphate and inorganic phosphate. The sequence is that of 3-phosphoshikimate 1-carboxyvinyltransferase from Brachyspira hyodysenteriae (strain ATCC 49526 / WA1).